A 313-amino-acid polypeptide reads, in one-letter code: Myeloma-overexpressed gene protein (313 aa).

The disordered stretch occupies residues 107–129 (ERNKGDKGAQTGAGLSQEAEDVD).

This Homo sapiens (Human) protein is Myeloma-overexpressed gene protein (MYEOV).